An 815-amino-acid chain; its full sequence is MRVLKFGGTSLANPERFSQAAKLIEQAHLEEQAAGVLSAPAKITNHLVALSEKAALNQSTDTHFNEAIEIFYNIINGLHTENNQFDLNGTKALIDAEFVQIKGLLEEIRQAGKVEDAVKATIDCRGEKLSIAMMKAWFEARGYSVHIVDPVKQLLAKGGYLESSVEIEESTKRVDAANIAKDKVVLMAGFTAGNEKGELVLLGRNGSDYSAACLAACLGASVCEIWTDVDGVYTCDPRLVPDARLLPTLSYREAMELSYFGAKVIHPRTIGPLLPQNIPCVIKNTGNPSAPGSIIDGNVKSESLQVKGITNLDNLAMFNVSGPGMQGMVGMASRVFSAMSGAGISVILITQSSSEYSISFCVPVKSAEVAKTVLETEFANELNEHQLEPIEVIKDLSIISVVGDGMKQAKGIAARFFSALAQANISIVAIAQGSSERSISAVVPQNKAIEAVKATHQALFNNKKVVDMFLVGVGGVGGELIEQVKRQKEYLAKKNVEIRVCAIANSNRMLLDENGLNLEDWKNDLENATQPSDFDVLLSFIKLHHVVNPVFVDCTSAESVAGLYARALKEGFHVVTPNKKANTRELVYYNELRQNAQASQHKFLYETNVGAGLPVIENLQNLLAAGDELEYFEGILSGSLSFIFGKLEEGLSLSEVTALAREKGFTEPDPRDDLSGQDVARKLLILAREAGIELELSDVEVEGVLPKGFSDGKSADEFMAMLPQLDEEFKTRVATAKAEGKVLRYVGKISEGKCKVSIVAVDLNNPLYKVKDGENALAFYTRYYQPIPLLLRGYGAGNAVTAAGIFADILRTLQH.

The segment at 1–249 (MRVLKFGGTS…VPDARLLPTL (249 aa)) is aspartokinase. The interval 250 to 470 (SYREAMELSY…NNKKVVDMFL (221 aa)) is interface. ACT domains are found at residues 320–392 (VSGP…PIEV) and 401–478 (VVGD…GVGG). Residues 471–815 (VGVGGVGGEL…FADILRTLQH (345 aa)) are homoserine dehydrogenase. Positions 473, 475, 476, 504, and 555 each coordinate NAD(+). Val-476 is an NADP(+) binding site. Residue Val-476 participates in NADPH binding. Thr-555 contacts NADP(+). Thr-555, Ser-556, and Lys-579 together coordinate NADPH. Lys-579 serves as a coordination point for NADP(+). Residues Glu-606, Val-609, Ala-611, and Leu-613 each coordinate Na(+). 2 residues coordinate NADP(+): Gly-664 and Glu-667. Glu-667 and Asp-678 together coordinate L-homoserine. Lys-682 (proton donor) is an active-site residue. Gly-797 serves as a coordination point for NAD(+). Gly-797 contributes to the NADP(+) binding site. Residue Gly-797 participates in NADPH binding.

This sequence in the N-terminal section; belongs to the aspartokinase family. The protein in the C-terminal section; belongs to the homoserine dehydrogenase family. As to quaternary structure, homotetramer. The cofactor is a metal cation.

It catalyses the reaction L-homoserine + NADP(+) = L-aspartate 4-semialdehyde + NADPH + H(+). It carries out the reaction L-homoserine + NAD(+) = L-aspartate 4-semialdehyde + NADH + H(+). The catalysed reaction is L-aspartate + ATP = 4-phospho-L-aspartate + ADP. Its pathway is amino-acid biosynthesis; L-lysine biosynthesis via DAP pathway; (S)-tetrahydrodipicolinate from L-aspartate: step 1/4. The protein operates within amino-acid biosynthesis; L-methionine biosynthesis via de novo pathway; L-homoserine from L-aspartate: step 1/3. It functions in the pathway amino-acid biosynthesis; L-methionine biosynthesis via de novo pathway; L-homoserine from L-aspartate: step 3/3. It participates in amino-acid biosynthesis; L-threonine biosynthesis; L-threonine from L-aspartate: step 1/5. Its pathway is amino-acid biosynthesis; L-threonine biosynthesis; L-threonine from L-aspartate: step 3/5. Functionally, bifunctional aspartate kinase and homoserine dehydrogenase that catalyzes the first and the third steps toward the synthesis of lysine, methionine and threonine from aspartate. In Haemophilus influenzae (strain ATCC 51907 / DSM 11121 / KW20 / Rd), this protein is Bifunctional aspartokinase/homoserine dehydrogenase (thrA).